Reading from the N-terminus, the 533-residue chain is Peptide chain release factor 3 (533 aa).

Residues 9–284 form the tr-type G domain; sequence ARRRTFAIIS…ALCELSPPPL (276 aa). GTP-binding positions include 18–25, 95–99, and 149–152; these read SHPDAGKT, DTPGH, and NKLD.

The protein belongs to the TRAFAC class translation factor GTPase superfamily. Classic translation factor GTPase family. PrfC subfamily.

Its subcellular location is the cytoplasm. Functionally, increases the formation of ribosomal termination complexes and stimulates activities of RF-1 and RF-2. It binds guanine nucleotides and has strong preference for UGA stop codons. It may interact directly with the ribosome. The stimulation of RF-1 and RF-2 is significantly reduced by GTP and GDP, but not by GMP. In Cupriavidus taiwanensis (strain DSM 17343 / BCRC 17206 / CCUG 44338 / CIP 107171 / LMG 19424 / R1) (Ralstonia taiwanensis (strain LMG 19424)), this protein is Peptide chain release factor 3.